The primary structure comprises 725 residues: Ribonuclease R (725 aa).

In terms of domain architecture, RNB spans R264 to F592. Residues G644 to I725 enclose the S1 motif domain.

This sequence belongs to the RNR ribonuclease family. RNase R subfamily.

Its subcellular location is the cytoplasm. It catalyses the reaction Exonucleolytic cleavage in the 3'- to 5'-direction to yield nucleoside 5'-phosphates.. Its function is as follows. 3'-5' exoribonuclease that releases 5'-nucleoside monophosphates and is involved in maturation of structured RNAs. This chain is Ribonuclease R, found in Mycoplasma genitalium (strain ATCC 33530 / DSM 19775 / NCTC 10195 / G37) (Mycoplasmoides genitalium).